A 262-amino-acid polypeptide reads, in one-letter code: MASLNQEQLKILEQTRQRLLHLTQSLGSLSNSINQSDPLPPWSSLQSQATIISNNLLSISHLLTEHQELLSSIVAYPTPNFPGRTESTILHQLMRTKLEPRVEEWVARGRNVARHNTASSQIRAQQGAAAEGETVRLSVDELLDLWHWAPIAANMEARRRDWGGDYTLEEKEMGVKNVITGLKRQLDEGDEEDEEEEEEEEDMQGEEMEVVVGAHTKAGGGSGVEFDIARGSSHIPSKPVAPGMPLDDIFRFMMTGAPPRPR.

Residues 168–211 (LEEKEMGVKNVITGLKRQLDEGDEEDEEEEEEEEDMQGEEMEVV) adopt a coiled-coil conformation. The disordered stretch occupies residues 183–206 (KRQLDEGDEEDEEEEEEEEDMQGE). Residues 188–206 (EGDEEDEEEEEEEEDMQGE) show a composition bias toward acidic residues.

It belongs to the Mediator complex subunit 8 family. As to quaternary structure, component of the Mediator complex.

It is found in the nucleus. Component of the Mediator complex, a coactivator involved in the regulated transcription of nearly all RNA polymerase II-dependent genes. Mediator functions as a bridge to convey information from gene-specific regulatory proteins to the basal RNA polymerase II transcription machinery. Mediator is recruited to promoters by direct interactions with regulatory proteins and serves as a scaffold for the assembly of a functional preinitiation complex with RNA polymerase II and the general transcription factors. The protein is Mediator of RNA polymerase II transcription subunit 8 (MED8) of Coccidioides immitis (strain RS) (Valley fever fungus).